The chain runs to 452 residues: Probable glycine dehydrogenase (decarboxylating) subunit 1 (452 aa).

It belongs to the GcvP family. N-terminal subunit subfamily. As to quaternary structure, the glycine cleavage system is composed of four proteins: P, T, L and H. In this organism, the P 'protein' is a heterodimer of two subunits.

It carries out the reaction N(6)-[(R)-lipoyl]-L-lysyl-[glycine-cleavage complex H protein] + glycine + H(+) = N(6)-[(R)-S(8)-aminomethyldihydrolipoyl]-L-lysyl-[glycine-cleavage complex H protein] + CO2. The glycine cleavage system catalyzes the degradation of glycine. The P protein binds the alpha-amino group of glycine through its pyridoxal phosphate cofactor; CO(2) is released and the remaining methylamine moiety is then transferred to the lipoamide cofactor of the H protein. This Sphingopyxis alaskensis (strain DSM 13593 / LMG 18877 / RB2256) (Sphingomonas alaskensis) protein is Probable glycine dehydrogenase (decarboxylating) subunit 1.